The chain runs to 144 residues: Histone H2B.2, sperm (144 aa).

A disordered region spans residues 1–51; sequence MPRSPAKTSPRKGSPRKGSPSRKASPKRGGKGAKRAGKGGRRRRVVKRRRR. Short sequence motifs (SPKK motif) lie at residues 4-7, 9-12, 14-17, 19-22, and 25-28; these read SPAK, SPRK, SPSR, and SPKR. Phosphoserine occurs at positions 14, 19, and 25. Basic residues predominate over residues 24-51; the sequence is ASPKRGGKGAKRAGKGGRRRRVVKRRRR. O-linked (GlcNAc) serine glycosylation occurs at Ser131. A Glycyl lysine isopeptide (Lys-Gly) (interchain with G-Cter in ubiquitin) cross-link involves residue Lys139.

This sequence belongs to the histone H2B family. In terms of assembly, the nucleosome is a histone octamer containing two molecules each of H2A, H2B, H3 and H4 assembled in one H3-H4 heterotetramer and two H2A-H2B heterodimers. The octamer wraps approximately 147 bp of DNA. Monoubiquitination of Lys-139 gives a specific tag for epigenetic transcriptional activation and is also prerequisite for histone H3 'Lys-4' and 'Lys-79' methylation. In terms of processing, phosphorylated on SPKK motifs 3, 4 and 5; which may regulate DNA binding. Dephosphorylated during maturation of spermatids to mature sperm and rephosphorylated at fertilization.

It localises to the nucleus. The protein resides in the chromosome. Core component of nucleosome. Nucleosomes wrap and compact DNA into chromatin, limiting DNA accessibility to the cellular machineries which require DNA as a template. Histones thereby play a central role in transcription regulation, DNA repair, DNA replication and chromosomal stability. DNA accessibility is regulated via a complex set of post-translational modifications of histones, also called histone code, and nucleosome remodeling. This Parechinus angulosus (Angulate sea urchin) protein is Histone H2B.2, sperm.